We begin with the raw amino-acid sequence, 272 residues long: Orotidine 5'-phosphate decarboxylase (272 aa).

Catalysis depends on lysine 96, which acts as the Proton donor.

It belongs to the OMP decarboxylase family. Type 2 subfamily.

The catalysed reaction is orotidine 5'-phosphate + H(+) = UMP + CO2. The protein operates within pyrimidine metabolism; UMP biosynthesis via de novo pathway; UMP from orotate: step 2/2. The protein is Orotidine 5'-phosphate decarboxylase of Phocaeicola vulgatus (strain ATCC 8482 / DSM 1447 / JCM 5826 / CCUG 4940 / NBRC 14291 / NCTC 11154) (Bacteroides vulgatus).